The primary structure comprises 60 residues: uncharacterized protein (60 aa).

The disordered stretch occupies residues 27–50; it reads VKNNNNNNNNNNNNNNNNNNNNNK. Residues 29–49 are compositionally biased toward low complexity; it reads NNNNNNNNNNNNNNNNNNNNN.

This is an uncharacterized protein from Dictyostelium discoideum (Social amoeba).